The primary structure comprises 251 residues: Hydroxyacylglutathione hydrolase (251 aa).

Residues H53, H55, D57, H58, H110, D127, and H165 each contribute to the Zn(2+) site.

This sequence belongs to the metallo-beta-lactamase superfamily. Glyoxalase II family. As to quaternary structure, monomer. Zn(2+) serves as cofactor.

The catalysed reaction is an S-(2-hydroxyacyl)glutathione + H2O = a 2-hydroxy carboxylate + glutathione + H(+). Its pathway is secondary metabolite metabolism; methylglyoxal degradation; (R)-lactate from methylglyoxal: step 2/2. Functionally, thiolesterase that catalyzes the hydrolysis of S-D-lactoyl-glutathione to form glutathione and D-lactic acid. In Pectobacterium atrosepticum (strain SCRI 1043 / ATCC BAA-672) (Erwinia carotovora subsp. atroseptica), this protein is Hydroxyacylglutathione hydrolase.